The sequence spans 649 residues: Epithelial sodium channel subunit gamma (649 aa).

Topologically, residues 1–55 (MAPGEKIKAKIKKNLPVTGPQAPTIKELMRWYCLNTNTHGCRRIVVSRGRLRRLL) are cytoplasmic. Residues 56-76 (WIGFTLTAVALILWQCALLVF) form a helical membrane-spanning segment. Residues 77–541 (SFYTVSVSIK…GGQLGLWMSC (465 aa)) lie on the Extracellular side of the membrane. Disulfide bonds link C100–C283, C207–C214, C260–C267, C372–C457, C394–C453, C398–C449, C407–C434, and C409–C423. The interval 135 to 221 (RKRREAESWN…SDCATYTFSS (87 aa)) is gating release of inhibition by proteolysis (GRIP); protease-sensitive region that is responsible for the proteolytic activation of the channel. N209 is a glycosylation site (N-linked (GlcNAc...) asparagine). An N-linked (GlcNAc...) asparagine glycan is attached at N497. Residues 542-562 (SVVCVIEIIEVFFIDFFSIIA) form a helical membrane-spanning segment. At 563–649 (RRQWQKAKEW…LTDTQMLDEL (87 aa)) the chain is on the cytoplasmic side. A PY motif; recruits WW domain-containing proteins and is thereby required for ubiquitination and inhibition of the channel by NEDD4 and NEDD4L motif is present at residues 623–627 (PPPKY).

Belongs to the amiloride-sensitive sodium channel (TC 1.A.6) family. SCNN1G subfamily. In terms of assembly, component of the heterotrimeric epithelial sodium channel (ENaC) composed of an alpha/SCNN1A, a beta/SCNN1B and a gamma/SCNN1G subunit. An additional delta/SCNN1D subunit can replace the alpha/SCNN1A subunit to form an alternative channel with specific properties. Interacts with WWP1 (via WW domains). Interacts with WWP2 (via WW domains); inhibits the channel. Interacts with the full-length immature form of PCSK9 (pro-PCSK9); inhibits ENaC by promoting its proteasomal degradation. Interacts with BPIFA1; the interaction is indirect via SCNN1B and inhibits the proteolytic maturation of SCNN1A and SCNN1G and the activation of ENaC. In terms of processing, phosphorylated on serine and threonine residues. Aldosterone and insulin increase the basal level of phosphorylation. Ubiquitinated. Can be ubiquitinated at multiple sites and undergo monoubiquitination and polyubiquitination. Ubiquitination by NEDD4 or NEDD4L inhibits the ENaC channel through endocytosis, intracellular retention and degradation of its individual subunits. Post-translationally, ENaC is activated through the proteolytic maturation of its subunits. Furin cleaves the SCNN1G subunit first, followed by cleavage by prostasin (PRSS8), which results in a stepwise increase in the open probability of the channel due to the release of an inhibitory tract. BPIFA1, which is recruited by the SCNN1B subunit, prevents the proteolytic activation of ENaC. In terms of processing, N-glycosylated. N-linked glycans are processed to complex type during ENaC complex assembly and transport to the plasma membrane. Expressed in kidney (at protein level).

It localises to the apical cell membrane. The catalysed reaction is Na(+)(in) = Na(+)(out). With respect to regulation, originally identified and characterized by its inhibition by the diuretic drug amiloride. Functionally, this is one of the three pore-forming subunits of the heterotrimeric epithelial sodium channel (ENaC), a critical regulator of sodium balance and fluid homeostasis. ENaC operates in epithelial tissues, where it mediates the electrodiffusion of sodium ions from extracellular fluid through the apical membrane of cells, with water following osmotically. It plays a key role in maintaining sodium homeostasis through electrogenic sodium reabsorption in the kidneys. Additionally, ENaC is essential for airway surface liquid homeostasis, which is crucial for proper mucus clearance. The polypeptide is Epithelial sodium channel subunit gamma (Homo sapiens (Human)).